Here is a 260-residue protein sequence, read N- to C-terminus: Mitochondrial import inner membrane translocase subunit Tim29 (260 aa).

A mitochondrion-targeting transit peptide spans 1–31; the sequence is MAAAALRRFWSRRRAEAGDAVVAKPGVWARL. The Mitochondrial matrix portion of the chain corresponds to 32–59; sequence GSWARALLRDYAEACRDASAEARARPGR. The helical transmembrane segment at 60–77 threads the bilayer; the sequence is AAVYVGLLGGAAACFTLA. Residues 78 to 260 lie on the Mitochondrial intermembrane side of the membrane; the sequence is PSEGAFEEAL…HSLVQAEAPR (183 aa).

Component of the TIM22 complex, which core is composed of TIMM22, associated with TIMM10 (TIMM10A and/or TIMM10B), TIMM9, AGK and TIMM29. Interacts with TIMM10B; the interaction is direct. Interacts with TOMM40; linking the TIM22 complex to the TOM complex. Interacts with TIMM22 (when oxidized); the interaction is direct.

The protein resides in the mitochondrion inner membrane. Component of the TIM22 complex, a complex that mediates the import and insertion of multi-pass transmembrane proteins into the mitochondrial inner membrane. The TIM22 complex forms a twin-pore translocase that uses the membrane potential as the external driving force. Required for the stability of the TIM22 complex and functions in the assembly of the TIMM22 protein into the TIM22 complex. May facilitate cooperation between TIM22 and TOM complexes by interacting with TOMM40. The sequence is that of Mitochondrial import inner membrane translocase subunit Tim29 from Homo sapiens (Human).